The sequence spans 371 residues: Meiotic drive suppressor wtf18 (371 aa).

The next 8 membrane-spanning stretches (helical) occupy residues 86-106, 120-140, 153-173, 197-217, 233-253, 257-277, 287-307, and 321-341; these read FLLR…TAWV, AFSV…FCFF, VTVI…AQCV, DLVV…FGCV, CSIS…IWTL, LFGL…TKGL, ATGY…LFFY, and FIGN…GGIG.

The protein belongs to the WTF family. Homomer. Interacts with other proteins that exhibit high sequence similarity.

It is found in the spore membrane. The protein localises to the vacuole membrane. Acts as a suppressor component of the dual wtf meiotic drive system, and can suppress but not confer meiotic drive by compatible poisons. Wtf meiotic drive systems promote unequal transmission of alleles from the parental zygote to progeny spores by encoding a poison and an antidote from the same locus; the poison is trans-acting and forms toxic aggregates in all spores within an ascus, wherease the antidote is spore-specific and targets aggregates for degradation by the vacuole. Meiotic drive by wtf systems therefore lead to poisoning of all progeny that do not inherit the dual poison/antidote allele, or express a compatible antidote. The chain is Meiotic drive suppressor wtf18 from Schizosaccharomyces kambucha (Fission yeast).